A 303-amino-acid polypeptide reads, in one-letter code: Quinolinate synthase (303 aa).

Iminosuccinate-binding residues include His24 and Ser41. Cys86 is a binding site for [4Fe-4S] cluster. Residues 112 to 114 and Ser129 each bind iminosuccinate; that span reads YVN. Cys172 serves as a coordination point for [4Fe-4S] cluster. Iminosuccinate is bound by residues 198–200 and Thr215; that span reads HPE. A [4Fe-4S] cluster-binding site is contributed by Cys260.

This sequence belongs to the quinolinate synthase family. Type 2 subfamily. It depends on [4Fe-4S] cluster as a cofactor.

The protein resides in the cytoplasm. It carries out the reaction iminosuccinate + dihydroxyacetone phosphate = quinolinate + phosphate + 2 H2O + H(+). Its pathway is cofactor biosynthesis; NAD(+) biosynthesis; quinolinate from iminoaspartate: step 1/1. In terms of biological role, catalyzes the condensation of iminoaspartate with dihydroxyacetone phosphate to form quinolinate. The polypeptide is Quinolinate synthase (Clostridium kluyveri (strain NBRC 12016)).